Reading from the N-terminus, the 366-residue chain is Anhydro-N-acetylmuramic acid kinase (366 aa).

An ATP-binding site is contributed by 10-17 (GTSMDGID).

This sequence belongs to the anhydro-N-acetylmuramic acid kinase family.

The catalysed reaction is 1,6-anhydro-N-acetyl-beta-muramate + ATP + H2O = N-acetyl-D-muramate 6-phosphate + ADP + H(+). It participates in amino-sugar metabolism; 1,6-anhydro-N-acetylmuramate degradation. It functions in the pathway cell wall biogenesis; peptidoglycan recycling. In terms of biological role, catalyzes the specific phosphorylation of 1,6-anhydro-N-acetylmuramic acid (anhMurNAc) with the simultaneous cleavage of the 1,6-anhydro ring, generating MurNAc-6-P. Is required for the utilization of anhMurNAc either imported from the medium or derived from its own cell wall murein, and thus plays a role in cell wall recycling. The chain is Anhydro-N-acetylmuramic acid kinase from Legionella pneumophila (strain Paris).